A 239-amino-acid chain; its full sequence is 2-C-methyl-D-erythritol 4-phosphate cytidylyltransferase (239 aa).

The protein belongs to the IspD/TarI cytidylyltransferase family. IspD subfamily. As to quaternary structure, homodimer.

The catalysed reaction is 2-C-methyl-D-erythritol 4-phosphate + CTP + H(+) = 4-CDP-2-C-methyl-D-erythritol + diphosphate. It functions in the pathway isoprenoid biosynthesis; isopentenyl diphosphate biosynthesis via DXP pathway; isopentenyl diphosphate from 1-deoxy-D-xylulose 5-phosphate: step 2/6. Catalyzes the formation of 4-diphosphocytidyl-2-C-methyl-D-erythritol from CTP and 2-C-methyl-D-erythritol 4-phosphate (MEP). This Sodalis glossinidius (strain morsitans) protein is 2-C-methyl-D-erythritol 4-phosphate cytidylyltransferase.